Reading from the N-terminus, the 3258-residue chain is Protein unc-80 homolog (3258 aa).

Residues 152–173 are disordered; the sequence is VENQGSPGQPCQSSSNDEEENN. A compositionally biased stretch (low complexity) spans 155–166; it reads QGSPGQPCQSSS. S257 carries the post-translational modification Phosphoserine. Disordered stretches follow at residues 291–316, 449–468, 522–560, 697–717, 732–784, 963–1019, 1034–1076, 1404–1447, and 1817–1836; these read RGNSFDGSLSSQTSQERGPSHSRASL, RKEDRERKGSIPFHHTGKRR, RRGSSDAATEMESLSARHSHSHHTLVSDLPDPSNSHGEN, KKSENKENETLEKRPSEGAFQ, PAVS…TPVS, PGKK…EQMQ, KSQS…ISLR, EDSK…MSNA, and AVSAEDEEHTTEHTPNHHVP. Residues 295–307 show a composition bias toward polar residues; it reads FDGSLSSQTSQER. The residue at position 525 (S525) is a Phosphoserine. Residues 698 to 712 are compositionally biased toward basic and acidic residues; that stretch reads KSENKENETLEKRPS. The span at 732-767 shows a compositional bias: gly residues; the sequence is PAVSGAGDGGGEEGGGGDGGGGGGDGGGGGGGGGGP. 2 stretches are compositionally biased toward basic and acidic residues: residues 769–780 and 965–974; these read EKNDKNQEKDES and KKVEENEQES. Over residues 1035–1052 the composition is skewed to low complexity; it reads SQSAASDTSSQSEQDTSE. Residues 1066 to 1076 show a composition bias toward basic residues; it reads ARSRSRRISLR. Residues 1417–1429 are compositionally biased toward basic and acidic residues; it reads LKSDAGVEEKKEG. A run of 4 helical transmembrane segments spans residues 2268–2288, 2398–2418, 2785–2805, and 2831–2851; these read PFVLQLFASVAPLLEFPDAAN, IAATAALATSLQALLYSVEVL, GLAESTSQAAYLALKVILVCF, and LALWDFLDFIVRTRIPIFVLL. Residues 2942 to 2964 are compositionally biased toward polar residues; sequence NTGTGTVWEQDSEPSQQASQDTL. Positions 2942–2982 are disordered; the sequence is NTGTGTVWEQDSEPSQQASQDTLSRTDEEDEENDSISMPSV. S3042 is modified (phosphoserine). The segment at 3051-3213 is disordered; sequence NLLVQQPLGR…DDFTGLETSS (163 aa). The segment covering 3059–3068 has biased composition (basic residues); it reads GRKRGLRQLR. A compositionally biased stretch (polar residues) spans 3088–3100; the sequence is RLSTTRRSIQPKT. Low complexity predominate over residues 3117–3129; that stretch reads PEPAAAPTDALPA. A compositionally biased stretch (acidic residues) spans 3175–3186; sequence PTEEGEKEEDTE.

Belongs to the unc-80 family. As to quaternary structure, NALCN complex consists of NALCN and auxiliary subunits, UNC79, UNC80 and NACL1. These auxiliary subunits are essential for the NALCN complex function. Interacts (via N-terminus half) with NALCN; this interaction facilitates NALCN surface localization. Interacts with UNC79. UNC80 bridges NALCN to UNC79. Phosphorylated on tyrosine residues. In terms of tissue distribution, moderately expressed in fetal brain, spinal cord, skeletal muscle, thymus, spleen, fetal liver, small intestine, colon, kidney and uterus. Highly expressed in adrenal gland, prostate and testis, as well as in brain and cerebellum.

The protein localises to the cell membrane. Its function is as follows. Auxiliary subunit of the NALCN sodium channel complex, a voltage-gated ion channel responsible for the resting Na(+) permeability that controls neuronal excitability. Activated by neuropeptides substance P, neurotensin, and extracellular Ca(2+) that regulates neuronal excitability by controlling the sizes of NALCN-dependent sodium-leak current. UNC80 is essential for NALCN sensitivity to extracellular Ca(2+). This Homo sapiens (Human) protein is Protein unc-80 homolog.